The primary structure comprises 166 residues: Endoribonuclease YbeY (166 aa).

The Zn(2+) site is built by H132, H136, and H142.

It belongs to the endoribonuclease YbeY family. Zn(2+) serves as cofactor.

Its subcellular location is the cytoplasm. Single strand-specific metallo-endoribonuclease involved in late-stage 70S ribosome quality control and in maturation of the 3' terminus of the 16S rRNA. The sequence is that of Endoribonuclease YbeY from Clostridium botulinum (strain Langeland / NCTC 10281 / Type F).